The sequence spans 749 residues: Catalase-peroxidase (749 aa).

Residues 98-234 constitute a cross-link (tryptophyl-tyrosyl-methioninium (Trp-Tyr) (with M-260)); it reads WHAAGTYRVQ…LAASHMGLIY (137 aa). His-99 serves as the catalytic Proton acceptor. A cross-link (tryptophyl-tyrosyl-methioninium (Tyr-Met) (with W-98)) is located at residues 234 to 260; it reads YVNPEGPNGEPDPVAAAHDIRTTFGRM. His-275 is a binding site for heme b.

Belongs to the peroxidase family. Peroxidase/catalase subfamily. As to quaternary structure, homodimer or homotetramer. It depends on heme b as a cofactor. Formation of the three residue Trp-Tyr-Met cross-link is important for the catalase, but not the peroxidase activity of the enzyme.

The protein localises to the cytoplasm. The catalysed reaction is H2O2 + AH2 = A + 2 H2O. The enzyme catalyses 2 H2O2 = O2 + 2 H2O. In terms of biological role, bifunctional enzyme with both catalase and broad-spectrum peroxidase activity. This Mycosarcoma maydis (Corn smut fungus) protein is Catalase-peroxidase.